The chain runs to 677 residues: Methionine--tRNA ligase (677 aa).

The 'HIGH' region signature appears at 15-25 (PYANGSIHLGH). 4 residues coordinate Zn(2+): cysteine 146, cysteine 149, cysteine 159, and cysteine 162. The 'KMSKS' region motif lies at 333–337 (KMSKS). ATP is bound at residue lysine 336. The tRNA-binding domain maps to 575–677 (DFAKIDLRVA…DGAKPGQQVK (103 aa)).

The protein belongs to the class-I aminoacyl-tRNA synthetase family. MetG type 1 subfamily. In terms of assembly, homodimer. Zn(2+) is required as a cofactor.

Its subcellular location is the cytoplasm. The catalysed reaction is tRNA(Met) + L-methionine + ATP = L-methionyl-tRNA(Met) + AMP + diphosphate. Is required not only for elongation of protein synthesis but also for the initiation of all mRNA translation through initiator tRNA(fMet) aminoacylation. This is Methionine--tRNA ligase from Salmonella agona (strain SL483).